The following is a 388-amino-acid chain: Succinate--CoA ligase [ADP-forming] subunit beta (388 aa).

Residues 9-244 enclose the ATP-grasp domain; it reads KQLFAEYGLP…PSQDDPREAH (236 aa). ATP is bound by residues Lys-46, 53–55, Glu-99, Thr-102, and Glu-107; that span reads GRG. Mg(2+)-binding residues include Asn-199 and Asp-213. Substrate-binding positions include Asn-264 and 321 to 323; that span reads GIV.

Belongs to the succinate/malate CoA ligase beta subunit family. In terms of assembly, heterotetramer of two alpha and two beta subunits. Mg(2+) serves as cofactor.

The catalysed reaction is succinate + ATP + CoA = succinyl-CoA + ADP + phosphate. The enzyme catalyses GTP + succinate + CoA = succinyl-CoA + GDP + phosphate. Its pathway is carbohydrate metabolism; tricarboxylic acid cycle; succinate from succinyl-CoA (ligase route): step 1/1. Succinyl-CoA synthetase functions in the citric acid cycle (TCA), coupling the hydrolysis of succinyl-CoA to the synthesis of either ATP or GTP and thus represents the only step of substrate-level phosphorylation in the TCA. The beta subunit provides nucleotide specificity of the enzyme and binds the substrate succinate, while the binding sites for coenzyme A and phosphate are found in the alpha subunit. This Ectopseudomonas mendocina (strain ymp) (Pseudomonas mendocina) protein is Succinate--CoA ligase [ADP-forming] subunit beta.